The sequence spans 57 residues: UPF0391 membrane protein Arad_3976 (57 aa).

Helical transmembrane passes span 4-24 (WAII…SGVS) and 33-53 (VLFA…VMAG).

This sequence belongs to the UPF0391 family.

The protein localises to the cell membrane. The sequence is that of UPF0391 membrane protein Arad_3976 from Rhizobium rhizogenes (strain K84 / ATCC BAA-868) (Agrobacterium radiobacter).